Consider the following 141-residue polypeptide: MNKPKQILRLRKRAEFLALRNGEKRRGPLFLLEVRERTEEESQTAKIGEKPRAGFTVTKKNGNAVIRNRIRRRLREAVRCHAGRDMAPSTDYVIVAREQALTAPFSRLTEELSRRIKAKGERRGDGKRRTERPESGPVNGK.

A compositionally biased stretch (basic and acidic residues) spans 114–134; the sequence is RRIKAKGERRGDGKRRTERPE. The interval 114–141 is disordered; the sequence is RRIKAKGERRGDGKRRTERPESGPVNGK.

The protein belongs to the RnpA family. Consists of a catalytic RNA component (M1 or rnpB) and a protein subunit.

It catalyses the reaction Endonucleolytic cleavage of RNA, removing 5'-extranucleotides from tRNA precursor.. In terms of biological role, RNaseP catalyzes the removal of the 5'-leader sequence from pre-tRNA to produce the mature 5'-terminus. It can also cleave other RNA substrates such as 4.5S RNA. The protein component plays an auxiliary but essential role in vivo by binding to the 5'-leader sequence and broadening the substrate specificity of the ribozyme. In Brucella anthropi (strain ATCC 49188 / DSM 6882 / CCUG 24695 / JCM 21032 / LMG 3331 / NBRC 15819 / NCTC 12168 / Alc 37) (Ochrobactrum anthropi), this protein is Ribonuclease P protein component.